Consider the following 250-residue polypeptide: Phosphoribosylaminoimidazole-succinocarboxamide synthase (250 aa).

It belongs to the SAICAR synthetase family.

The catalysed reaction is 5-amino-1-(5-phospho-D-ribosyl)imidazole-4-carboxylate + L-aspartate + ATP = (2S)-2-[5-amino-1-(5-phospho-beta-D-ribosyl)imidazole-4-carboxamido]succinate + ADP + phosphate + 2 H(+). It participates in purine metabolism; IMP biosynthesis via de novo pathway; 5-amino-1-(5-phospho-D-ribosyl)imidazole-4-carboxamide from 5-amino-1-(5-phospho-D-ribosyl)imidazole-4-carboxylate: step 1/2. This chain is Phosphoribosylaminoimidazole-succinocarboxamide synthase, found in Bifidobacterium longum subsp. infantis (strain ATCC 15697 / DSM 20088 / JCM 1222 / NCTC 11817 / S12).